The primary structure comprises 136 residues: Large ribosomal subunit protein uL3 (136 aa).

An N5-methylglutamine modification is found at Q83.

The protein belongs to the universal ribosomal protein uL3 family. Part of the 50S ribosomal subunit. Forms a cluster with proteins L14 and L19. Methylated by PrmB.

One of the primary rRNA binding proteins, it binds directly near the 3'-end of the 23S rRNA, where it nucleates assembly of the 50S subunit. In Carsonella ruddii, this protein is Large ribosomal subunit protein uL3 (rplC).